The chain runs to 245 residues: tRNA pseudouridine synthase A (245 aa).

Asp-52 acts as the Nucleophile in catalysis. Tyr-110 contacts substrate.

Belongs to the tRNA pseudouridine synthase TruA family. Homodimer.

The catalysed reaction is uridine(38/39/40) in tRNA = pseudouridine(38/39/40) in tRNA. Functionally, formation of pseudouridine at positions 38, 39 and 40 in the anticodon stem and loop of transfer RNAs. This chain is tRNA pseudouridine synthase A, found in Ruminiclostridium cellulolyticum (strain ATCC 35319 / DSM 5812 / JCM 6584 / H10) (Clostridium cellulolyticum).